The chain runs to 1150 residues: uncharacterized protein (1150 aa).

This sequence belongs to the TMEM1 family.

This is an uncharacterized protein from Schizosaccharomyces pombe (strain 972 / ATCC 24843) (Fission yeast).